The chain runs to 1360 residues: Zinc finger protein GLI1 (1360 aa).

Residues 198-245 form a disordered region; sequence DTIGSKRLEDGSEGDISSPASVGTQDPLLGLLDGRDDLEKDDGKHEPE. The segment covering 230 to 245 has biased composition (basic and acidic residues); sequence DGRDDLEKDDGKHEPE. The segment at 250–275 adopts a C2H2-type 1 zinc-finger fold; it reads TNCHWESCTKEFDTQEHLVHHINNEH. The segment at 298 to 306 is interaction with DNA; it reads KAQYMLVVH. 3 C2H2-type zinc fingers span residues 316-340, 346-371, and 377-402; these read HKCTFEGCNKAYSRLENLKTHLRSH, YVCEHEGCNKAFSNASDRAKHQNRTH, and YVCKIPGCTKRYTDPSSLRKHVKTVH. Interaction with DNA regions lie at residues 360 to 365 and 390 to 396; these read ASDRAK and DPSSLRK. 4 disordered regions span residues 390-434, 457-500, 718-740, and 1120-1213; these read DPSS…NVKG, ITLK…SFED, IIHPAQAPGAGIRRASDPARTGG, and YMNY…IQPQ. The span at 461–473 shows a compositional bias: low complexity; the sequence is SQPSPGGQSSCSS. Polar residues predominate over residues 474-496; that stretch reads ERSPLGSTNNNDSGVEMNANTGG. A compositionally biased stretch (low complexity) spans 1134 to 1143; sequence SPSSQDSQSS. A compositionally biased stretch (polar residues) spans 1173–1190; sequence RQHSVSSQSTYMGSPNQL.

It belongs to the GLI C2H2-type zinc-finger protein family.

It is found in the cytoplasm. The protein localises to the nucleus. Its function is as follows. Acts as a transcriptional activator. Binds to the DNA consensus sequence 5'-GACCACCCA-3'. May regulate the transcription of specific genes during normal development. Mediates SHH signaling. Plays a role in cell proliferation and differentiation via its role in SHH signaling. In Xenopus laevis (African clawed frog), this protein is Zinc finger protein GLI1 (gli1).